The sequence spans 319 residues: Ribosomal protein uL3 glutamine methyltransferase (319 aa).

It belongs to the protein N5-glutamine methyltransferase family. PrmB subfamily.

It catalyses the reaction L-glutaminyl-[ribosomal protein uL3] + S-adenosyl-L-methionine = N(5)-methyl-L-glutaminyl-[ribosomal protein uL3] + S-adenosyl-L-homocysteine + H(+). Its function is as follows. Methylates large ribosomal subunit protein uL3 on a specific glutamine residue. The chain is Ribosomal protein uL3 glutamine methyltransferase from Bradyrhizobium diazoefficiens (strain JCM 10833 / BCRC 13528 / IAM 13628 / NBRC 14792 / USDA 110).